The sequence spans 564 residues: 4-hydroxy-7-methoxy-3-oxo-3,4-dihydro-2H-1,4-benzoxazin-2-yl glucoside beta-D-glucosidase 1d, chloroplastic (564 aa).

The transit peptide at Met1–Ala50 directs the protein to the chloroplast. A beta-D-glucoside-binding positions include Gln92, His194, and Asn239–Glu240. Glu240 serves as the catalytic Proton donor. A disulfide bridge links Cys259 with Cys265. A beta-D-glucoside contacts are provided by residues Tyr383, Glu456, Trp504, Glu511–Trp512, and Phe520. Glu456 acts as the Nucleophile in catalysis.

It belongs to the glycosyl hydrolase 1 family. Homo- and heterohexamers. Expressed in young seedlings early after germination.

It localises to the plastid. The protein resides in the chloroplast. The catalysed reaction is Hydrolysis of terminal, non-reducing beta-D-glucosyl residues with release of beta-D-glucose.. It catalyses the reaction DIMBOA beta-D-glucoside + H2O = DIMBOA + D-glucose. The enzyme catalyses DIBOA beta-D-glucoside + H2O = DIBOA + D-glucose. Functionally, acts in defense of young plant parts against pests via the production of hydroxamic acids from hydroxamic acid glucosides. Enzymatic activity is highly correlated with plant growth. The preferred substrate is DIMBOA-beta-D-glucoside. In Triticum aestivum (Wheat), this protein is 4-hydroxy-7-methoxy-3-oxo-3,4-dihydro-2H-1,4-benzoxazin-2-yl glucoside beta-D-glucosidase 1d, chloroplastic (GLU1D).